The primary structure comprises 677 residues: Collagen alpha-2(IX) chain (677 aa).

Residues 1–21 form the signal peptide; sequence MAHRSPALCLLLLHAACLCLA. Residues 25 to 161 are triple-helical region 4 (COL4); sequence GPPGEPGPRG…PGKPGPPGHI (137 aa). The span at 28–41 shows a compositional bias: pro residues; that stretch reads GEPGPRGPPGPPGV. Positions 28 to 516 are disordered; sequence GEPGPRGPPG…MPGQRGVAGR (489 aa). A compositionally biased stretch (low complexity) spans 53–66; that stretch reads SPGAPGSPGAKGEP. Pro residues predominate over residues 68–77; the sequence is APGPDGPPGK. Residues 91-100 are compositionally biased toward gly residues; the sequence is GPWGGQGLKG. 2 stretches are compositionally biased toward pro residues: residues 104 to 121 and 137 to 158; these read LPGP…PPGL and KGDP…PGPP. The residue at position 158 (Pro158) is a 4-hydroxyproline. The interval 162–178 is nonhelical region 4 (NC4); it reads QGVEGSADFLCPTNCPP. A glycan (O-linked (Xyl...) (glycosaminoglycan) serine) is linked at Ser167. Pro178 is subject to 4-hydroxyproline. The tract at residues 179–517 is triple-helical region 3 (COL3); that stretch reads GPKGPQGLQG…PGQRGVAGRD (339 aa). At Lys181 the chain carries 5-hydroxylysine. Lys181 is a glycosylation site (O-linked (Gal...) hydroxylysine). Lys190 carries the post-translational modification Allysine. 3 stretches are compositionally biased toward low complexity: residues 363–382, 430–442, and 496–505; these read TPGL…AGVP, PGKT…TGDP, and RGLLGERGVP. The nonhelical region 3 (NC3) stretch occupies residues 518–547; that stretch reads AGDQHIIDVVLKMMQEQLAEVAVSAKRAAL. Residues 548-630 are triple-helical region 2 (COL2); it reads GGVGAMGPPG…PGLPGIPGHA (83 aa). Residues 550 to 657 form a disordered region; the sequence is VGAMGPPGPP…GRPGSPGPAG (108 aa). Residues 555 to 565 show a composition bias toward pro residues; it reads PPGPPGPPGPP. Residues 597–609 show a composition bias toward basic and acidic residues; it reads KRGEKGERGDTGR. The segment at 631–632 is nonhelical region 2 (NC2); the sequence is LA. A triple-helical region 1 (COL1) region spans residues 633 to 662; sequence GKDGERGPPGVPGDAGRPGSPGPAGLPGFC. The tract at residues 663-677 is nonhelical region 1 (NC1); the sequence is EPAACLGALPTPRHG.

This sequence belongs to the fibril-associated collagens with interrupted helices (FACIT) family. In terms of assembly, heterotrimer of an alpha 1(IX), an alpha 2(IX) and an alpha 3(IX) chain. The chains are linked to each other by interchain disulfide bonds. Trimers are also cross-linked via hydroxylysines. In terms of processing, covalently linked to the telopeptides of type II collagen by lysine-derived cross-links. Prolines at the third position of the tripeptide repeating unit (G-X-Y) are hydroxylated in some or all of the chains.

The protein resides in the secreted. Its subcellular location is the extracellular space. It is found in the extracellular matrix. Functionally, structural component of hyaline cartilage and vitreous of the eye. The chain is Collagen alpha-2(IX) chain (COL9A2) from Gallus gallus (Chicken).